The sequence spans 141 residues: Hemoglobin subunit alpha (141 aa).

Positions 1–141 (VLSSDDKCNV…VSSVLTSKYR (141 aa)) constitute a Globin domain. Histidine 58 contributes to the O2 binding site. Residue histidine 87 coordinates heme b.

Belongs to the globin family. In terms of assembly, heterotetramer of two alpha chains and two beta chains. As to expression, red blood cells.

Functionally, involved in oxygen transport from the lung to the various peripheral tissues. The chain is Hemoglobin subunit alpha (HBA) from Crocodylus niloticus (Nile crocodile).